An 817-amino-acid polypeptide reads, in one-letter code: Probable beta-glucosidase G (817 aa).

Residues 1–20 (MANIAHLIVSGLLAATVAHG) form the signal peptide. Asparagine 40, asparagine 58, asparagine 229, and asparagine 276 each carry an N-linked (GlcNAc...) asparagine glycan. Aspartate 304 is an active-site residue. 10 N-linked (GlcNAc...) asparagine glycosylation sites follow: asparagine 343, asparagine 350, asparagine 402, asparagine 507, asparagine 563, asparagine 584, asparagine 623, asparagine 662, asparagine 679, and asparagine 715.

This sequence belongs to the glycosyl hydrolase 3 family.

It is found in the secreted. It catalyses the reaction Hydrolysis of terminal, non-reducing beta-D-glucosyl residues with release of beta-D-glucose.. Its pathway is glycan metabolism; cellulose degradation. Functionally, beta-glucosidases are one of a number of cellulolytic enzymes involved in the degradation of cellulosic biomass. Catalyzes the last step releasing glucose from the inhibitory cellobiose. In Aspergillus terreus (strain NIH 2624 / FGSC A1156), this protein is Probable beta-glucosidase G (bglG).